Reading from the N-terminus, the 399-residue chain is Glucosamine kinase (399 aa).

ATP-binding positions include Lys-98, 149–151 (EYL), and Asp-156. Asp-262 provides a ligand contact to D-glucosamine. Mg(2+) contacts are provided by Gln-267, Asp-279, and Asp-281. The Substrate specificity determinant motif motif lies at 366 to 381 (QVLREIIYAARHLPRW). A D-glucosamine-binding site is contributed by Glu-370.

It belongs to the actinobacterial glucosamine kinase family. As to quaternary structure, monomer. Mg(2+) serves as cofactor.

The catalysed reaction is D-glucosamine + ATP = D-glucosamine 6-phosphate + ADP + H(+). Its function is as follows. Catalyzes the ATP-dependent phosphorylation of D-glucosamine (GlcN) to D-glucosamine 6-phosphate. May be involved in the phosphorylation of acquired extracellular GlcN derived from the hydrolysis of chitosan, i.e., in the incorporation of exogenous GlcN into the bacterial GlcNAc metabolism. Is unable to phosphorylate maltose. In Mycolicibacterium smegmatis (strain ATCC 700084 / mc(2)155) (Mycobacterium smegmatis), this protein is Glucosamine kinase.